A 328-amino-acid chain; its full sequence is Putative UDP-N-acetylglucosamine--dolichyl-phosphate N-acetylglucosaminephosphotransferase (328 aa).

9 helical membrane passes run 1 to 21 (MLVS…VTLI), 48 to 68 (VPVL…FTFL), 78 to 98 (IENV…LGLL), 107 to 127 (ATRA…SVGH), 129 to 149 (IISI…IIIL), 166 to 186 (LNGL…YIGL), 192 to 212 (SFYA…FLIF), 228 to 248 (FIGS…ALFF), and 301 to 321 (YHIV…AVVF).

Belongs to the glycosyltransferase 4 family.

It localises to the cell membrane. It catalyses the reaction a di-trans,poly-cis-dolichyl phosphate + UDP-N-acetyl-alpha-D-glucosamine = an N-acetyl-alpha-D-glucosaminyl-diphospho-di-trans,poly-cis-dolichol + UMP. Its activity is regulated as follows. Inhibited by tunicamycin. The protein is Putative UDP-N-acetylglucosamine--dolichyl-phosphate N-acetylglucosaminephosphotransferase (gnpTA) of Sulfolobus acidocaldarius (strain ATCC 33909 / DSM 639 / JCM 8929 / NBRC 15157 / NCIMB 11770).